The sequence spans 172 residues: uncharacterized protein (172 aa).

This is an uncharacterized protein from Aquifex aeolicus (strain VF5).